The primary structure comprises 314 residues: Methionyl-tRNA formyltransferase (314 aa).

110-113 contacts (6S)-5,6,7,8-tetrahydrofolate; the sequence is SLLP.

This sequence belongs to the Fmt family.

The catalysed reaction is L-methionyl-tRNA(fMet) + (6R)-10-formyltetrahydrofolate = N-formyl-L-methionyl-tRNA(fMet) + (6S)-5,6,7,8-tetrahydrofolate + H(+). Functionally, attaches a formyl group to the free amino group of methionyl-tRNA(fMet). The formyl group appears to play a dual role in the initiator identity of N-formylmethionyl-tRNA by promoting its recognition by IF2 and preventing the misappropriation of this tRNA by the elongation apparatus. This chain is Methionyl-tRNA formyltransferase, found in Bacillus cereus (strain B4264).